The chain runs to 481 residues: Tryptophan--tRNA ligase, cytoplasmic (481 aa).

The WHEP-TRS domain occupies 12 to 68 (SPLELFNSIAAQGELVRSLKAGNAPKDEIESAVKMLLSLKMNYKTAMGEEYKAGCPP). A disordered region spans residues 65–85 (GCPPGNSTAGSNGDPDATKAS). Lys-158 carries the post-translational modification N6-succinyllysine. The short motif at 168-177 (PSSEAMHLGH) is the 'HIGH' region element. The 'KMSKS' region signature appears at 353–357 (KMSAS). Position 355 is a phosphoserine (Ser-355).

The protein belongs to the class-I aminoacyl-tRNA synthetase family. As to quaternary structure, homodimer. Interacts with oxidized form of GAPDH. Post-translationally, proteolytic cleavage generates 2 forms; T1-TrpRS and T2-TrpRS.

It localises to the cytoplasm. It catalyses the reaction tRNA(Trp) + L-tryptophan + ATP = L-tryptophyl-tRNA(Trp) + AMP + diphosphate + H(+). In terms of biological role, catalyzes the attachment of tryptophan to tRNA(Trp) in a two-step reaction: tryptophan is first activated by ATP to form Trp-AMP and then transferred to the acceptor end of the tRNA(Trp). Could also possess an angiostatic activity. This is Tryptophan--tRNA ligase, cytoplasmic from Rattus norvegicus (Rat).